Reading from the N-terminus, the 507-residue chain is WD-40 repeat-containing protein MSI4 (507 aa).

Residue Met1 is modified to N-acetylmethionine. A disordered region spans residues 1–66 (MESDEAAAVS…KTQQSPSVDE (66 aa)). WD repeat units lie at residues 95–137 (RWGP…KPRV), 162–202 (IHPG…NRHA), and 217–257 (GHQD…TTIG). Residues 258–272 (TDSKSSGSIIKQTGE) are compositionally biased toward polar residues. The interval 258–282 (TDSKSSGSIIKQTGEGTDKNESPTV) is disordered. WD repeat units lie at residues 290–330 (GHED…NPVT), 335–375 (AHDA…ANGV), 384–424 (GHKA…KKSD), and 439–486 (GHRD…YRPE). A DWD box motif is present at residues 308 to 323 (FCSVGDDSCLILWDAR).

It belongs to the WD repeat RBAP46/RBAP48/MSI1 family. In terms of assembly, interacts with AHL16 and HOS1. Interacts with LHP1, PDP1, PDP2 and PDP3. Component of the PRC2 (polycomb repressive complex 2) complex which regulates histone methylation on histone H3K27. In terms of tissue distribution, expressed in rosette leaves, cauline leaves, main stems and developing fruits. Expressed at higher levels in roots and flowers.

The protein localises to the nucleus. Its function is as follows. Core histone-binding subunit that may target chromatin assembly factors, chromatin remodeling factors and histone deacetylases to their histone substrates in a manner that is regulated by nucleosomal DNA. Component of the flowering autonomous pathway which positively regulates flowering by promoting transcriptional repression of the flowering repressor FLC. May promote histone deacetylation at the FLC locus leading to the formation of repressive chromatin structures. Forms a histone deacetylase complex with HDA5, HDA6 and FLD that represses FLC gene expression to control flowering time. Also negatively regulates cold-responsive genes. Acts together with PDP1 and MSI5 to regulate the function of the PRC2 complex on FLC. Required for systemic acquired resistance (SAR) toward pathogenic bacteria (e.g. Pseudomonas syringae pv tomato DC3000 (avrPto)). Together with FLD and MSI4/FVE, contributes to dehydroabietinal-dependent (DA, a diterpenoid tricyclic diterpene) activation of flowering ans SAR. In Arabidopsis thaliana (Mouse-ear cress), this protein is WD-40 repeat-containing protein MSI4.